A 310-amino-acid polypeptide reads, in one-letter code: Malate dehydrogenase (310 aa).

Residues 7–12 (GAGNVG) and D32 each bind NAD(+). Substrate-binding residues include R81 and R87. NAD(+)-binding positions include N94 and 117 to 119 (VSN). 2 residues coordinate substrate: N119 and R150. H174 acts as the Proton acceptor in catalysis.

This sequence belongs to the LDH/MDH superfamily. MDH type 3 family.

The catalysed reaction is (S)-malate + NAD(+) = oxaloacetate + NADH + H(+). Functionally, catalyzes the reversible oxidation of malate to oxaloacetate. In Chlorobium limicola (strain DSM 245 / NBRC 103803 / 6330), this protein is Malate dehydrogenase.